The chain runs to 444 residues: L-cysteine:1D-myo-inositol 2-amino-2-deoxy-alpha-D-glucopyranoside ligase (444 aa).

Position 66 (cysteine 66) interacts with Zn(2+). Residues 66–69, threonine 81, and 104–106 contribute to the L-cysteinyl-5'-AMP site; these read CGIT and NVT. Residues 68–78 carry the 'HIGH' region motif; the sequence is ITPYDATHLGH. Positions 206–211 match the 'ERGGDP' region motif; the sequence is EHGGDP. Position 246 (tryptophan 246) interacts with L-cysteinyl-5'-AMP. Position 250 (cysteine 250) interacts with Zn(2+). 268–270 contributes to the L-cysteinyl-5'-AMP binding site; the sequence is GSD. Histidine 275 lines the Zn(2+) pocket. Valine 302 contributes to the L-cysteinyl-5'-AMP binding site. A 'KMSKS' region motif is present at residues 308–312; it reads KMSKS.

It belongs to the class-I aminoacyl-tRNA synthetase family. MshC subfamily. In terms of assembly, monomer. The cofactor is Zn(2+).

It carries out the reaction 1D-myo-inositol 2-amino-2-deoxy-alpha-D-glucopyranoside + L-cysteine + ATP = 1D-myo-inositol 2-(L-cysteinylamino)-2-deoxy-alpha-D-glucopyranoside + AMP + diphosphate + H(+). Functionally, catalyzes the ATP-dependent condensation of GlcN-Ins and L-cysteine to form L-Cys-GlcN-Ins. This is L-cysteine:1D-myo-inositol 2-amino-2-deoxy-alpha-D-glucopyranoside ligase from Parafrankia sp. (strain EAN1pec).